Here is a 287-residue protein sequence, read N- to C-terminus: Ciliary microtubule inner protein 6 (287 aa).

Composition is skewed to basic and acidic residues over residues Met1–Asp15 and Glu25–Gly34. Residues Met1–Ser42 are disordered. A mn 1 region spans residues Gly128–Thr160. Positions Lys179–Glu287 are disordered. Basic and acidic residues-rich tracts occupy residues Glu203–Asn212 and Leu232–Gln245. The interval Ser213 to Ala246 is mn 2.

It is found in the cell projection. The protein localises to the cilium. The polypeptide is Ciliary microtubule inner protein 6 (Homo sapiens (Human)).